A 350-amino-acid polypeptide reads, in one-letter code: Small ribosomal subunit biogenesis GTPase RsgA (350 aa).

Polar residues predominate over residues Met-1–Asn-17. Residues Met-1–Asp-33 form a disordered region. In terms of domain architecture, CP-type G spans Thr-104–Phe-273. Residues Asn-160 to Asp-163 and Gly-214 to Ser-222 contribute to the GTP site. Cys-297, Cys-302, His-304, and Cys-310 together coordinate Zn(2+).

Belongs to the TRAFAC class YlqF/YawG GTPase family. RsgA subfamily. As to quaternary structure, monomer. Associates with 30S ribosomal subunit, binds 16S rRNA. Requires Zn(2+) as cofactor.

The protein localises to the cytoplasm. One of several proteins that assist in the late maturation steps of the functional core of the 30S ribosomal subunit. Helps release RbfA from mature subunits. May play a role in the assembly of ribosomal proteins into the subunit. Circularly permuted GTPase that catalyzes slow GTP hydrolysis, GTPase activity is stimulated by the 30S ribosomal subunit. This is Small ribosomal subunit biogenesis GTPase RsgA from Escherichia coli (strain ATCC 8739 / DSM 1576 / NBRC 3972 / NCIMB 8545 / WDCM 00012 / Crooks).